The primary structure comprises 513 residues: uncharacterized protein (513 aa).

Residues 11–219 enclose the CYTH domain; the sequence is HLEVERKFDV…SKLARVLGAT (209 aa). The region spanning 228 to 506 is the CHAD domain; it reads PQPPADPVHR…LEAALRKLDK (279 aa).

This is an uncharacterized protein from Mycobacterium tuberculosis (strain ATCC 25618 / H37Rv).